Consider the following 354-residue polypeptide: MRLEKEKELKSILKLLAPGTQLREGLENILRAKTGGLIVLGDSEQILKVVDGGFAINSEYSPSYIYELAKMDGAIILSSDLKKILYANTQLIPDSTIPTFETGTRHRTADRVAKQTGVIVIAISQRRNVITVYRGHIKYVLRDSSVMLGRANQALQTLEKYVAVLDRVVNNLNILEFQDIVTLFDVMTAIQRTEMVMRIVSEIEIYICELGNEGRLISMQLNELIKSVERDGIFMIRDYCQTDMDYDEIYRQIQEISSDDVLNLDFISRAMGYVGVPLVDTLISPRGYRMLSKIPRIPATVMDNLVKNFKELKEIMEASYEDLDRVEGIGEARARAIKNGLRRLREQIMIDNKF.

The region spanning 6–144 (EKELKSILKL…GHIKYVLRDS (139 aa)) is the DAC domain. ATP-binding positions include Gly-73, Leu-91, and 104 to 108 (TRHRT).

The protein belongs to the DisA family. In terms of assembly, homooctamer. The cofactor is Mg(2+).

It carries out the reaction 2 ATP = 3',3'-c-di-AMP + 2 diphosphate. Functionally, participates in a DNA-damage check-point that is active prior to asymmetric division when DNA is damaged. DisA forms globular foci that rapidly scan along the chromosomes during sporulation, searching for lesions. When a lesion is present, DisA pauses at the lesion site. This triggers a cellular response that culminates in a temporary block in sporulation initiation. Also has diadenylate cyclase activity, catalyzing the condensation of 2 ATP molecules into cyclic di-AMP (c-di-AMP). c-di-AMP acts as a signaling molecule that couples DNA integrity with progression of sporulation. The rise in c-di-AMP level generated by DisA while scanning the chromosome, operates as a positive signal that advances sporulation; upon encountering a lesion, the DisA focus arrests at the damaged site and halts c-di-AMP synthesis. This Clostridium kluyveri (strain ATCC 8527 / DSM 555 / NBRC 12016 / NCIMB 10680 / K1) protein is DNA integrity scanning protein DisA.